Reading from the N-terminus, the 255-residue chain is Type III pantothenate kinase (255 aa).

D6–K13 serves as a coordination point for ATP. Residue G107–R110 participates in substrate binding. D109 acts as the Proton acceptor in catalysis. Position 132 (T132) interacts with ATP. T184 contacts substrate.

Belongs to the type III pantothenate kinase family. As to quaternary structure, homodimer. It depends on NH4(+) as a cofactor. K(+) is required as a cofactor.

The protein localises to the cytoplasm. It catalyses the reaction (R)-pantothenate + ATP = (R)-4'-phosphopantothenate + ADP + H(+). It functions in the pathway cofactor biosynthesis; coenzyme A biosynthesis; CoA from (R)-pantothenate: step 1/5. Functionally, catalyzes the phosphorylation of pantothenate (Pan), the first step in CoA biosynthesis. In Roseiflexus sp. (strain RS-1), this protein is Type III pantothenate kinase.